The chain runs to 297 residues: MKRPDYRTLQALDAVIRERGFERAAQKLCITQSAVSQRIKQLENMFGQPLLVRTVPPRPTEQGQKLLALLRQVELLEEEWLGDEQTGSTPLLLSLAVNADSLATWLLPALSAVLADSPIRLNLQVEDETRTQERLRRGEVVGAVSIQPQALPSCLVDQLGALDYLFVGSKAFADRYFPNGVTRAALLKAPAVAFDHLDDMHQAFLQQNFDLPPGSVPCHIVNSSEAFVQLARQGTTCCMIPHLQIEKELKSGELIDLTPGLYQRRMLYWHRFAPESRMMRNVTDALLAYGHKVLRQD.

The 57-residue stretch at 4-60 folds into the HTH lysR-type domain; it reads PDYRTLQALDAVIRERGFERAAQKLCITQSAVSQRIKQLENMFGQPLLVRTVPPRPT. The H-T-H motif DNA-binding region spans 21-40; sequence FERAAQKLCITQSAVSQRIK.

The protein belongs to the LysR transcriptional regulatory family. As to quaternary structure, homodimer.

Its function is as follows. Controls the transcription of genes involved in arginine and lysine metabolism. This Enterobacter sp. (strain 638) protein is HTH-type transcriptional regulator ArgP.